The sequence spans 465 residues: UDP-N-acetylmuramate--L-alanine ligase (465 aa).

An ATP-binding site is contributed by 112–118; the sequence is GTHGKTT.

The protein belongs to the MurCDEF family.

It localises to the cytoplasm. It catalyses the reaction UDP-N-acetyl-alpha-D-muramate + L-alanine + ATP = UDP-N-acetyl-alpha-D-muramoyl-L-alanine + ADP + phosphate + H(+). The protein operates within cell wall biogenesis; peptidoglycan biosynthesis. Functionally, cell wall formation. This Burkholderia ambifaria (strain ATCC BAA-244 / DSM 16087 / CCUG 44356 / LMG 19182 / AMMD) (Burkholderia cepacia (strain AMMD)) protein is UDP-N-acetylmuramate--L-alanine ligase.